The primary structure comprises 375 residues: Probable serine/threonine-protein kinase PBL28 (375 aa).

The residue at position 65 (Thr65) is a Phosphothreonine. Residues 76–356 (FSDENLLGKG…MDCVKELQLI (281 aa)) form the Protein kinase domain. Residues 82–90 (LGKGGFGRV) and Lys104 each bind ATP. Tyr152 carries the post-translational modification Phosphotyrosine. Residue Asp205 is the Proton acceptor of the active site. Thr245 bears the Phosphothreonine mark. Position 253 is a phosphotyrosine (Tyr253).

Belongs to the protein kinase superfamily. Ser/Thr protein kinase family.

It localises to the cell membrane. The enzyme catalyses L-seryl-[protein] + ATP = O-phospho-L-seryl-[protein] + ADP + H(+). The catalysed reaction is L-threonyl-[protein] + ATP = O-phospho-L-threonyl-[protein] + ADP + H(+). May be involved in plant defense signaling. This is Probable serine/threonine-protein kinase PBL28 from Arabidopsis thaliana (Mouse-ear cress).